The primary structure comprises 381 residues: Stearoyl-[acyl-carrier-protein] 9-desaturase 1, chloroplastic (381 aa).

The transit peptide at 1 to 26 (MQVVGTVRVSGCGAVVAPSRRQCRVS) directs the protein to the chloroplast. Residues glutamate 120, glutamate 158, histidine 161, glutamate 211, glutamate 244, and histidine 247 each contribute to the Fe cation site.

This sequence belongs to the fatty acid desaturase type 2 family. In terms of assembly, homodimer. The cofactor is Fe(2+).

The protein resides in the plastid. It localises to the chloroplast. It catalyses the reaction octadecanoyl-[ACP] + 2 reduced [2Fe-2S]-[ferredoxin] + O2 + 2 H(+) = (9Z)-octadecenoyl-[ACP] + 2 oxidized [2Fe-2S]-[ferredoxin] + 2 H2O. The protein operates within lipid metabolism; fatty acid metabolism. Functionally, converts stearoyl-ACP to oleoyl-ACP by introduction of a cis double bond between carbons 9 and 10 of the acyl chain. In Oryza sativa subsp. indica (Rice), this protein is Stearoyl-[acyl-carrier-protein] 9-desaturase 1, chloroplastic.